The sequence spans 622 residues: Pentatricopeptide repeat-containing protein At5g06540 (622 aa).

PPR repeat units lie at residues 81–115, 116–150, 151–181, 182–212, 213–247, 248–282, 283–313, 314–348, 349–384, and 385–419; these read NLFV…RIWP, DNIT…GFQN, DVYV…MGFR, DVVS…MPHR, NLFT…GVVA, NETV…HMTV, NLIL…LPET, DSLS…GFIP, RDVT…GIEP, and RLEH…PNAP. The interval 420–495 is type E motif; that stretch reads ILGALLGACK…PPGWSLIEID (76 aa). Residues 496-527 form a type E(+) motif region; that stretch reads GKINKFTMGDDQKHPEMGKIRRKWEEILGKIR. A type DYW motif region spans residues 528–622; sequence LIGYKGNTGD…NGVCSCRDYW (95 aa).

The protein belongs to the PPR family. PCMP-H subfamily.

The chain is Pentatricopeptide repeat-containing protein At5g06540 (PCMP-H88) from Arabidopsis thaliana (Mouse-ear cress).